We begin with the raw amino-acid sequence, 473 residues long: Adenosylhomocysteinase (473 aa).

Positions 64, 139, and 199 each coordinate substrate. Residue 200 to 202 (TTT) participates in NAD(+) binding. Substrate contacts are provided by K229 and D233. Residues N234, 263–268 (GYGDVG), E286, N321, 342–344 (IGH), and N387 each bind NAD(+).

This sequence belongs to the adenosylhomocysteinase family. NAD(+) is required as a cofactor.

Its subcellular location is the cytoplasm. It carries out the reaction S-adenosyl-L-homocysteine + H2O = L-homocysteine + adenosine. It functions in the pathway amino-acid biosynthesis; L-homocysteine biosynthesis; L-homocysteine from S-adenosyl-L-homocysteine: step 1/1. Functionally, may play a key role in the regulation of the intracellular concentration of adenosylhomocysteine. This is Adenosylhomocysteinase from Paraburkholderia xenovorans (strain LB400).